Reading from the N-terminus, the 460-residue chain is A-type ATP synthase subunit B (460 aa).

Belongs to the ATPase alpha/beta chains family. In terms of assembly, has multiple subunits with at least A(3), B(3), C, D, E, F, H, I and proteolipid K(x).

The protein localises to the cell membrane. Functionally, component of the A-type ATP synthase that produces ATP from ADP in the presence of a proton gradient across the membrane. The B chain is a regulatory subunit. This is A-type ATP synthase subunit B from Methanosarcina acetivorans (strain ATCC 35395 / DSM 2834 / JCM 12185 / C2A).